The sequence spans 1582 residues: SET-binding protein (1582 aa).

Disordered regions lie at residues 1-76 (MEPR…WVAG), 124-246 (ITIK…KVPA), 278-416 (LLGS…KRQS), and 446-513 (SNSE…KLSE). Residues 18–27 (EFLQGSSSRS) are compositionally biased toward polar residues. Over residues 57–74 (GSGRDVDCNSNADSEKWV) the composition is skewed to basic and acidic residues. Polar residues-rich tracts occupy residues 126-141 (IKQS…GKNS) and 213-229 (MEWS…QNCF). Over residues 278-298 (LLGSVVPSPSSHNSPATPSSS) the composition is skewed to low complexity. Residues 356–365 (ETTEGKREAY) show a composition bias toward basic and acidic residues. A compositionally biased stretch (polar residues) spans 368–388 (DSAQEASPARQSISSVSNPEN). Positions 450 to 465 (GSKKDPRVPKLGKMIE) are enriched in basic and acidic residues. The a.T hook 1 DNA-binding region spans 575-587 (KKKRGRPKKQPLL). Disordered regions lie at residues 595-617 (GTST…RKRR) and 709-787 (RGTI…ASTE). The span at 770–787 (LSTQLGGSNGNLSPASTE) shows a compositional bias: polar residues. Lysine 808 carries the post-translational modification N6-acetyllysine. A compositionally biased stretch (polar residues) spans 845–871 (SPVSESHSEETIPSDSGIGTDNNSTSD). The interval 845–880 (SPVSESHSEETIPSDSGIGTDNNSTSDQAEKSSESR) is disordered. A DNA-binding region (a.T hook 2) is located at residues 1007-1019 (KKKRGRPAKTNDT). Disordered regions lie at residues 1128–1155 (VGGA…DRIL), 1182–1215 (SGSD…VSKN), 1236–1265 (AKDK…TRSE), 1429–1461 (QRQS…RDQM), 1470–1489 (LPSK…EPAS), and 1507–1582 (EAPP…DVLP). The span at 1137-1150 (RLHKRKHKHKRKHK) shows a compositional bias: basic residues. Residues 1182–1196 (SGSDKELPLVSEKSK) are compositionally biased toward basic and acidic residues. The span at 1439–1448 (VKKRRGRPRK) shows a compositional bias: basic residues. Positions 1440–1452 (KKRRGRPRKQPSQ) form a DNA-binding region, a.T hook 3. Composition is skewed to pro residues over residues 1509 to 1533 (PPLP…PPLP) and 1546 to 1559 (QPPA…PQPL).

In terms of assembly, interacts with SET.

The protein resides in the nucleus. This is SET-binding protein (Setbp1) from Mus musculus (Mouse).